The chain runs to 341 residues: tRNA N6-adenosine threonylcarbamoyltransferase (341 aa).

Fe cation is bound by residues H111 and H115. Substrate-binding positions include 134 to 138, D167, G180, and N276; that span reads LVSGG. D304 provides a ligand contact to Fe cation.

The protein belongs to the KAE1 / TsaD family. Fe(2+) is required as a cofactor.

The protein localises to the cytoplasm. The enzyme catalyses L-threonylcarbamoyladenylate + adenosine(37) in tRNA = N(6)-L-threonylcarbamoyladenosine(37) in tRNA + AMP + H(+). Required for the formation of a threonylcarbamoyl group on adenosine at position 37 (t(6)A37) in tRNAs that read codons beginning with adenine. Is involved in the transfer of the threonylcarbamoyl moiety of threonylcarbamoyl-AMP (TC-AMP) to the N6 group of A37, together with TsaE and TsaB. TsaD likely plays a direct catalytic role in this reaction. The sequence is that of tRNA N6-adenosine threonylcarbamoyltransferase from Alteromonas mediterranea (strain DSM 17117 / CIP 110805 / LMG 28347 / Deep ecotype).